The following is an 814-amino-acid chain: Rap guanine nucleotide exchange factor 5 (814 aa).

The DEP domain maps to 43–118 (LQAADLVKDR…DNYVFYQFSS (76 aa)). The N-terminal Ras-GEF domain maps to 301–434 (ARYVVVSGTP…ELKEFQKILG (134 aa)). In terms of domain architecture, Ras-GEF spans 578–813 (NTWDLALELM…FELSHRLEPR (236 aa)).

The protein localises to the nucleus. Functionally, guanine nucleotide exchange factor (GEF) for RAP1A, RAP2A and MRAS/M-Ras-GTP. Its association with MRAS inhibits Rap1 activation. The polypeptide is Rap guanine nucleotide exchange factor 5 (Rapgef5) (Mus musculus (Mouse)).